We begin with the raw amino-acid sequence, 579 residues long: Nuclear receptor coactivator 5 (579 aa).

N-acetylmethionine is present on Met1. The tract at residues 1 to 77 is disordered; sequence MNTAPSRPSP…DIRDHRDSRS (77 aa). Residues 1–158 form a transcription repression region; sequence MNTAPSRPSP…RDSFDGRGPP (158 aa). Thr3 is subject to Phosphothreonine. Residues Ser9, Ser21, Ser29, Ser34, Ser96, Ser116, Ser126, Ser143, and Ser151 each carry the phosphoserine modification. Residues 11–77 show a composition bias toward basic and acidic residues; sequence TRRDPYSFGD…DIRDHRDSRS (67 aa). Positions 148–172 are disordered; sequence YRDSFDGRGPPGPESQSRAKERLKR. Thr274 bears the Phosphothreonine mark. An LXXLL motif motif is present at residues 345 to 349; sequence LINLL. 2 positions are modified to phosphoserine: Ser378 and Ser381. Disordered stretches follow at residues 378–428 and 446–529; these read SADS…PTSQ and ANSS…RPVS. Composition is skewed to low complexity over residues 395–420 and 446–460; these read SGSSLKSQPSSQPLQSGQVLPSATPT and ANSSSASPSVATGSS. Residues 458 to 579 are transcription activation; the sequence is GSSQNQNFST…APMGSYQRHY (122 aa). A compositionally biased stretch (polar residues) spans 461–485; sequence QNQNFSTAANSQPQQRPQASGNQPP.

As to quaternary structure, binds HTATIP2/TIP30. Interacts with YLPM1. Forms a complex with ILF2, ILF3, YLPM1, KHDRBS1, RBMX and PPP1CA.

Its subcellular location is the nucleus. Nuclear receptor coregulator that can have both coactivator and corepressor functions. Interacts with nuclear receptors for steroids (ESR1 and ESR2) independently of the steroid binding domain (AF-2) of the ESR receptors, and with the orphan nuclear receptor NR1D2. Involved in the coactivation of nuclear steroid receptors (ER) as well as the corepression of MYC in response to 17-beta-estradiol (E2). This Mus musculus (Mouse) protein is Nuclear receptor coactivator 5 (Ncoa5).